Consider the following 441-residue polypeptide: Bacteria-responsive protein 1 (441 aa).

The first 18 residues, 1-18, serve as a signal peptide directing secretion; sequence MWFFKVGALLFLAALVSA. An N-linked (GlcNAc...) asparagine glycan is attached at Asn20. Residues 25–441 form the GH18 domain; that stretch reads PKVLCYYDGQ…PILRAAKYRL (417 aa). A disulfide bridge connects residues Cys29 and Cys56. Asn225 is a glycosylation site (N-linked (GlcNAc...) asparagine).

It belongs to the glycosyl hydrolase 18 family. IDGF subfamily. As to expression, salivary gland (at protein level).

The protein resides in the secreted. In terms of biological role, promotes recruitment of host neutrophils at the bite site. Induces expression of IL1B and IL6 in the skin of the host. Functionally, (Microbial infection) Enhances Zika virus replication and exacerbates disease pathogenesis in the host. This chain is Bacteria-responsive protein 1, found in Aedes aegypti (Yellowfever mosquito).